Consider the following 212-residue polypeptide: Protein-L-isoaspartate O-methyltransferase (212 aa).

Ser60 is an active-site residue.

It belongs to the methyltransferase superfamily. L-isoaspartyl/D-aspartyl protein methyltransferase family.

It is found in the cytoplasm. It carries out the reaction [protein]-L-isoaspartate + S-adenosyl-L-methionine = [protein]-L-isoaspartate alpha-methyl ester + S-adenosyl-L-homocysteine. Functionally, catalyzes the methyl esterification of L-isoaspartyl residues in peptides and proteins that result from spontaneous decomposition of normal L-aspartyl and L-asparaginyl residues. It plays a role in the repair and/or degradation of damaged proteins. The polypeptide is Protein-L-isoaspartate O-methyltransferase (Methanococcus maripaludis (strain C7 / ATCC BAA-1331)).